The following is a 129-amino-acid chain: MRNSSSSTPPSIKAQHRAAKRRAIRRRRIDLNCGCSIYIHIDCRNNGFTHRGTYHCASSREWRLYLGDNKSPLFQDNQRRGSPLHQHQDIPLTNQVQPQPEESIGSPQGISQLPSMDDIDDSFWENLFK.

The Nuclear localization signal signature appears at 13–28; the sequence is KAQHRAAKRRAIRRRR. The segment at 33-50 is a zinc-finger region; sequence CGCSIYIHIDCRNNGFTH. The disordered stretch occupies residues 73-118; the sequence is LFQDNQRRGSPLHQHQDIPLTNQVQPQPEESIGSPQGISQLPSMDD. Residues 91 to 114 show a composition bias toward polar residues; the sequence is PLTNQVQPQPEESIGSPQGISQLP. A transactivation region spans residues 115 to 129; it reads SMDDIDDSFWENLFK.

This sequence belongs to the geminiviridae transcriptional activator protein family. Monomer. Homodimer. Homooligomer. Self-interaction correlates with nuclear localization and efficient activation of transcription. Monomers suppress local silencing by interacting with and inactivating host adenosine kinase (ADK) in the cytoplasm. Interacts with and inhibits host SNF1 kinase. Binds to ssDNA. Phosphorylated.

It localises to the host nucleus. The protein localises to the host cytoplasm. Its function is as follows. Strong activator of the late viral genes promoters. Enhances the expression of the capsid protein and nuclear shuttle protein. Acts as a suppressor of RNA-mediated gene silencing, also known as post-transcriptional gene silencing (PTGS), a mechanism of plant viral defense that limits the accumulation of viral RNAs. Suppresses the host RNA silencing by inhibiting adenosine kinase (ADK), a kinase involved in a general methylation pathway. Also suppresses the host basal defense by interacting with and inhibiting SNF1 kinase, a key regulator of cell metabolism implicated in innate antiviral defense. Determines pathogenicity. In Tomato golden mosaic virus (strain Yellow vein) (TGMV), this protein is Transcriptional activator protein.